The sequence spans 151 residues: MERPEPELIRQSWRAVSRSPLEHGTVLFARLFALEPDLLPLFQYNCRQFSSPEDCLSSPEFLDHIRKVMLVIDAAVTNVEDLSSLEEYLASLGRKHRAVGVKLSSFSTVGESLLYMLEKCLGPAFTPATRAAWSQLYGAVVQAMSRGWDSE.

A Globin domain is found at 1 to 149 (MERPEPELIR…VVQAMSRGWD (149 aa)). Heme b contacts are provided by His64 and His96.

It belongs to the globin family. As to quaternary structure, monomer. Homodimer and homotetramer; disulfide-linked. Mainly monomeric but also detected as part of homodimers and homotetramers. Interacts with 14-3-3 proteins; regulates the phosphorylation of NGB. Could interact (ferrous form) with G-alpha(i) proteins (GTP-bound form). Post-translationally, phosphorylated during hypoxia by ERK1/ERK2. Phosphorylation regulates the heme pocket hexacoordination preventing the association of His-64 with the heme metal center. Thereby, promotes the access of dioxygen and nitrite to the heme and stimulates the nitrite reductase activity. Phosphorylation during hypoxia is stabilized by 14-3-3 proteins.

Its subcellular location is the cytoplasm. It is found in the cytosol. The protein resides in the mitochondrion matrix. It catalyses the reaction Fe(III)-heme b-[protein] + nitric oxide + H2O = Fe(II)-heme b-[protein] + nitrite + 2 H(+). Functionally, monomeric globin with a bis-histidyl six-coordinate heme-iron atom through which it can bind dioxygen, carbon monoxide and nitric oxide. Could help transport oxygen and increase its availability to the metabolically active neuronal tissues, though its low quantity in tissues as well as its high affinity for dioxygen, which may limit its oxygen-releasing ability, argue against it. The ferrous/deoxygenated form exhibits a nitrite reductase activity and it could produce nitric oxide which in turn inhibits cellular respiration in response to hypoxia. In its ferrous/deoxygenated state, it may also exhibit GDI (Guanine nucleotide Dissociation Inhibitor) activity toward heterotrimeric G-alpha proteins, thereby regulating signal transduction to facilitate neuroprotective responses in the wake of hypoxia and associated oxidative stress. This Macaca mulatta (Rhesus macaque) protein is Neuroglobin.